Reading from the N-terminus, the 206-residue chain is Holliday junction branch migration complex subunit RuvA (206 aa).

A domain I region spans residues 1-63 (MISSLRGDVI…DDAHTLYAFS (63 aa)). The domain II stretch occupies residues 64–142 (TSEQRETFGI…ALEATSGQAT (79 aa)). A flexible linker region spans residues 143 to 150 (IGDIAATG). A domain III region spans residues 151-206 (NDTALQSQVVEALVGLGFTEAKAATAVKKILEEQNGTTDPSSVLREALQRLSGQKR).

It belongs to the RuvA family. In terms of assembly, homotetramer. Forms an RuvA(8)-RuvB(12)-Holliday junction (HJ) complex. HJ DNA is sandwiched between 2 RuvA tetramers; dsDNA enters through RuvA and exits via RuvB. An RuvB hexamer assembles on each DNA strand where it exits the tetramer. Each RuvB hexamer is contacted by two RuvA subunits (via domain III) on 2 adjacent RuvB subunits; this complex drives branch migration. In the full resolvosome a probable DNA-RuvA(4)-RuvB(12)-RuvC(2) complex forms which resolves the HJ.

The protein resides in the cytoplasm. Functionally, the RuvA-RuvB-RuvC complex processes Holliday junction (HJ) DNA during genetic recombination and DNA repair, while the RuvA-RuvB complex plays an important role in the rescue of blocked DNA replication forks via replication fork reversal (RFR). RuvA specifically binds to HJ cruciform DNA, conferring on it an open structure. The RuvB hexamer acts as an ATP-dependent pump, pulling dsDNA into and through the RuvAB complex. HJ branch migration allows RuvC to scan DNA until it finds its consensus sequence, where it cleaves and resolves the cruciform DNA. In Corynebacterium urealyticum (strain ATCC 43042 / DSM 7109), this protein is Holliday junction branch migration complex subunit RuvA.